The following is a 1374-amino-acid chain: MVSLRDNIESQPLSHNRRIRKNFGHINLVADIPNLIEIQKNSYEKNFLQLNIKDSERKNKGLQSILNSIFPISDSSNIANLEFVKYEFDTPKYDVDECSQRSLSYAAPLKVTLRLSIWDIDEDTGTREIKGIKEQEVYMGDIPLMTKNGTFIINGTERVVVSQMHRSPGVFFYHDEGKVHSSGKLLYSARVIPYRGSWLDFEFDAKDIIYFRIDRKRKLYATTLLRAIGMSTEEIIKFYYNSVTYKFVKNKGWSVKFIPQHITAHRLTSDLVDADTGNVLLKAGQKITPRLAQKYFGVGLNNILVTHETLIGKYLSEDLRDPASDEVLAKIGEMITSDMLKVINDLKIKNVNVLVINPQSGSYIRNTLFADKNQDREAALCDIFRVLRPGEPANIEAAESLFYNLFFDAERYDLSEVGRIKMNSRLELNISEEVTVLTIDDIKNIVRILVELKDGKGIIDDIDHLGNRRVRSVGELIENQFRIGLVRMEKSVIERMSAGDVDTVMPHDLVNSKILVSVVKEFFSTSQLSQFMDQTNPLSEITHKRRLSALGPGGLSRDRAGFEVRDVHPTHYGRICPIETPEGQNIGLINSMATYARINKHGFIESPYRRVKNGYVTDEVVYLSAIEEGKYKIGQANSKVDQDGKLQGEFINCRVEGGNFVMVEPDEVDFIDVTPMQVVSVAASLIPFLENDDANRALMGSNMQRQAVPLIKTEAPFVGTGVEGVVAKDSGASVLALHDGIVERVDSNRIVIRTLEQKVDGSPSVDIYNLLKFQKSNHNTCINQKPLVKVGHYVKKNDIIADGPSTDNGEIALGRNVLVAFLPWNGYNFEDSILISERIVKEDVFTSIHIEEFEVIARDTRLGPEEITRDIPNVSEEALRHLDEVGIIYVGAEVKAGDILVGKVTPKSESPITPEEKLLRAIFGEKAFDVKDSSLHVPSGVSGTVVEVRIFSRRGVEKDQRAIAIEKQQIEKLAKDRDDELEIIEHFVFSWLEKLLVGHVIINGPKQITAGQTITTEMLKGLSKGQLWQITVEDANVMNEIEQIKIHYDEKKYALDKRFTTKVEKLQSGDDLPQGALKVVKVFIATKHKLQPGDKMAGRHGNKGVISRIVPEEDMPFLEDGTVVDIVLNPLGLPSRMNIGQILETHLGWASINLAKKISTLVKEYKDNHIDIEEIKKFLLELYGKDINYILEGSEEEIISFCNKVSKGVYFATPVFDGAKVQDVKDMLELAGQDLSGQVKLIDGRTGEYFDRLVTVGHKYLLKLHHLVDNKIHSRSIGPYSLVTQQPLGGKSHFGGQRFGEMECWALQAYGAAYTLQEMLTVKSDDVNGRIKTYDSIVRGENNFESGIPESFNVMIKEFRSLCLNVKLEVTPSK.

The protein belongs to the RNA polymerase beta chain family. In terms of assembly, the RNAP catalytic core consists of 2 alpha, 1 beta, 1 beta' and 1 omega subunit. When a sigma factor is associated with the core the holoenzyme is formed, which can initiate transcription.

The enzyme catalyses RNA(n) + a ribonucleoside 5'-triphosphate = RNA(n+1) + diphosphate. Its function is as follows. DNA-dependent RNA polymerase catalyzes the transcription of DNA into RNA using the four ribonucleoside triphosphates as substrates. This is DNA-directed RNA polymerase subunit beta from Rickettsia prowazekii (strain Madrid E).